The chain runs to 595 residues: uncharacterized protein (595 aa).

Positions 112–180 (VRPPGYDPES…KDVFGRALPT (69 aa)) are disordered. Basic and acidic residues-rich tracts occupy residues 120 to 133 (ESAK…EKHK) and 161 to 174 (RTQE…KDVF). The segment at 211–228 (VKCLRCGNFGHQSGDRDC) adopts a CCHC-type; degenerate zinc-finger fold. Disordered stretches follow at residues 254 to 290 (HTDP…IVAE) and 310 to 595 (KSMS…RRRN). Over residues 256–267 (DPSEPLKWELKQ) the composition is skewed to basic and acidic residues. 2 stretches are compositionally biased toward basic residues: residues 316–331 (KKRK…KHSS) and 351–364 (RGSK…KKSK). 3 stretches are compositionally biased toward basic and acidic residues: residues 414-428 (HYYD…EIVD), 470-539 (VSEK…HVYE), and 547-565 (FSDR…ESNR). Positions 584-595 (RKHRYSTNRRRN) are enriched in basic residues.

This is an uncharacterized protein from Arabidopsis thaliana (Mouse-ear cress).